The following is a 663-amino-acid chain: Polyunsaturated fatty acid lipoxygenase ALOX12 (663 aa).

Positions 2-114 constitute a PLAT domain; that stretch reads GRYRVRVVTG…ILSLPEGTAR (113 aa). The Lipoxygenase domain occupies 115–663; that stretch reads LAGDNALDVF…PSRIENSITI (549 aa). The residue at position 246 (Ser-246) is a Phosphoserine. Positions 360, 365, 540, 544, and 663 each coordinate Fe cation.

The protein belongs to the lipoxygenase family. It depends on Fe cation as a cofactor. In terms of tissue distribution, found primarily in platelets and in microsomal and cytosolic fractions of the epidermis (at protein level).

Its subcellular location is the cytoplasm. The protein localises to the cytosol. It is found in the membrane. It catalyses the reaction (5Z,8Z,11Z,14Z)-eicosatetraenoate + O2 = (12S)-hydroperoxy-(5Z,8Z,10E,14Z)-eicosatetraenoate. The enzyme catalyses (9Z,12Z)-octadecadienoate + O2 = (13S)-hydroperoxy-(9Z,11E)-octadecadienoate. It carries out the reaction 2 leukotriene A4 + O2 + 2 H2O = 2 lipoxin A4. The catalysed reaction is 2 leukotriene A4 + O2 + 2 H2O = 2 lipoxin B4. It catalyses the reaction (5Z,8Z,11Z)-eicosatrienoate + O2 = (12S)-hydroperoxy-(5Z,8Z,10E)-eicosatrienoate. The enzyme catalyses (8Z,11Z,14Z)-eicosatrienoate + O2 = (12S)-hydroperoxy-(8Z,10E,14Z)-eicosatrienoate. It carries out the reaction (4Z,7Z,10Z,13Z,16Z,19Z)-docosahexaenoate + O2 = (14S)-hydroperoxy-(4Z,7Z,10Z,12E,16Z,19Z)-docosahexaenoate. The catalysed reaction is (7S)-hydroperoxy-(4Z,8E,10Z,13Z,16Z,19Z)-docosahexaenoate + O2 = (7S,14S)-dihydroperoxy-(4Z,8E,10Z,12E,16Z,19Z)-docosahexaenoate. It catalyses the reaction (7S)-hydroperoxy-(4Z,8E,10Z,13Z,16Z,19Z)-docosahexaenoate + O2 = (7S,17S)-dihydroperoxy-(4Z,8E,10Z,13Z,15E,19Z)-docosahexaenoate. The enzyme catalyses (14R,15S)-epoxy-(5Z,8Z,11Z)-eicosatrienoate + O2 = (12S)-hydroperoxy-(14R,15S)-epoxy-(5Z,8Z,10E)-eicosatrienoate. It carries out the reaction (14S,15R)-epoxy-(5Z,8Z,11Z)-eicosatrienoate + O2 = (12S)-hydroperoxy-(14S,15R)-epoxy-(5Z,8Z,10E)-eicosatrienoate. The catalysed reaction is (5Z,8Z,11Z,14Z)-eicosatetraenoate + O2 = (15S)-hydroperoxy-(5Z,8Z,11Z,13E)-eicosatetraenoate. It catalyses the reaction (14S)-hydroperoxy-(4Z,7Z,10Z,12E,16Z,19Z)-docosahexaenoate = (13S,14S)-epoxy-(4Z,7Z,9E,11E,16Z,19Z)-docosahexaenoate + H2O. The enzyme catalyses N-(5Z,8Z,11Z,14Z)-eicosatetraenoyl-L-alanine + O2 = N-(15S)-hydroperoxy-(5Z,8Z,11Z,13E)-eicosatetraenoyl-alanine. It carries out the reaction N-(5Z,8Z,11Z,14Z)-eicosatetraenoyl-L-alanine + O2 = N-(12S)-hydroperoxy-(5Z,8Z,10E,14Z)-eicosatetraenoyl-alanine. The catalysed reaction is N-(5Z,8Z,11Z,14Z)-eicosatetraenoyl-gamma-aminobutanoate + O2 = N-(15S)-hydroperoxy-(5Z,8Z,11Z,13E)-eicosatetraenoyl-gamma-aminobutanoate. It catalyses the reaction N-(5Z,8Z,11Z,14Z)-eicosatetraenoyl-gamma-aminobutanoate + O2 = N-(12S)-hydroperoxy-(5Z,8Z,10E,14Z)-eicosatetraenoyl-gamma-aminobutanoate. The enzyme catalyses N-(5Z,8Z,11Z,14Z)-eicosatetraenoyl-glycine + O2 = N-(15S)-hydroperoxy-(5Z,8Z,11Z,13E)-eicosatetraenoyl-glycine. It carries out the reaction N-(5Z,8Z,11Z,14Z)-eicosatetraenoyl-glycine + O2 = N-(12S)-hydroperoxy-(5Z,8Z,10E,14Z)-eicosatetraenoyl-glycine. The catalysed reaction is N-(5Z,8Z,11Z,14Z)-eicosatetraenoyl-taurine + O2 = N-(12S)-hydroperoxy-(5Z,8Z,10E,14Z)-eicosatetraenoyl-taurine. It catalyses the reaction N-(5Z,8Z,11Z,14Z)-eicosatetraenoyl-taurine + O2 = N-(15S)-hydroperoxy-(5Z,8Z,11Z,13E)-eicosatetraenoyl-taurine. The enzyme catalyses (5Z,8Z,11Z,14Z,17Z)-eicosapentaenoate + O2 = (12S)-hydroperoxy-(5Z,8Z,10E,14Z,17Z)-eicosapentaenoate. It participates in lipid metabolism; hydroperoxy eicosatetraenoic acid biosynthesis. With respect to regulation, activated by EGF. Arachidonic acid conversion is inhibited by (13S,14S)-epoxy-(4Z,7Z,9E,11E,16Z,19Z)-docosahexaenoate (13S,14S-epoxy-DHA). Arachidonate 12-lipoxygenase activity is decreased when PH decreases from 7.4 to 6. Its function is as follows. Catalyzes the regio and stereo-specific incorporation of molecular oxygen into free and esterified polyunsaturated fatty acids generating lipid hydroperoxides that can be further reduced to the corresponding hydroxy species. Mainly converts arachidonate ((5Z,8Z,11Z,14Z)-eicosatetraenoate) to the specific bioactive lipid (12S)-hydroperoxyeicosatetraenoate/(12S)-HPETE. Through the production of bioactive lipids like (12S)-HPETE it regulates different biological processes including platelet activation. It can also catalyze the epoxidation of double bonds of polyunsaturated fatty acids such as (14S)-hydroperoxy-docosahexaenoate/(14S)-HPDHA resulting in the formation of (13S,14S)-epoxy-DHA. Furthermore, it may participate in the sequential oxidations of DHA ((4Z,7Z,10Z,13Z,16Z,19Z)-docosahexaenoate) to generate specialized pro-resolving mediators (SPMs) like resolvin D5 ((7S,17S)-diHPDHA) and (7S,14S)-diHPDHA, that actively down-regulate the immune response and have anti-aggregation properties with platelets. An additional function involves a multistep process by which it transforms leukotriene A4/LTA4 into the bioactive lipids lipoxin A4/LXA4 and lipoxin B4/LXB4, both are vasoactive and LXA4 may regulate neutrophil function via occupancy of specific recognition sites. Can also peroxidize linoleate ((9Z,12Z)-octadecadienoate) to (13S)-hydroperoxyoctadecadienoate/ (13S-HPODE). Due to its role in regulating both the expression of the vascular endothelial growth factor (VEGF, an angiogenic factor involved in the survival and metastasis of solid tumors) and the expression of integrin beta-1 (known to affect tumor cell migration and proliferation), it can be regarded as protumorigenic. Important for cell survival, as it may play a role not only in proliferation but also in the prevention of apoptosis in vascular smooth muscle cells. In Mus musculus (Mouse), this protein is Polyunsaturated fatty acid lipoxygenase ALOX12 (Alox12).